A 217-amino-acid chain; its full sequence is ATP phosphoribosyltransferase (217 aa).

The protein belongs to the ATP phosphoribosyltransferase family. Short subfamily. As to quaternary structure, heteromultimer composed of HisG and HisZ subunits.

It is found in the cytoplasm. The enzyme catalyses 1-(5-phospho-beta-D-ribosyl)-ATP + diphosphate = 5-phospho-alpha-D-ribose 1-diphosphate + ATP. Its pathway is amino-acid biosynthesis; L-histidine biosynthesis; L-histidine from 5-phospho-alpha-D-ribose 1-diphosphate: step 1/9. Functionally, catalyzes the condensation of ATP and 5-phosphoribose 1-diphosphate to form N'-(5'-phosphoribosyl)-ATP (PR-ATP). Has a crucial role in the pathway because the rate of histidine biosynthesis seems to be controlled primarily by regulation of HisG enzymatic activity. The chain is ATP phosphoribosyltransferase from Syntrophomonas wolfei subsp. wolfei (strain DSM 2245B / Goettingen).